Consider the following 472-residue polypeptide: Uronate isomerase (472 aa).

This sequence belongs to the metallo-dependent hydrolases superfamily. Uronate isomerase family.

The catalysed reaction is D-glucuronate = D-fructuronate. It carries out the reaction aldehydo-D-galacturonate = keto-D-tagaturonate. It participates in carbohydrate metabolism; pentose and glucuronate interconversion. This chain is Uronate isomerase, found in Opitutus terrae (strain DSM 11246 / JCM 15787 / PB90-1).